The chain runs to 396 residues: S-adenosylmethionine synthase (396 aa).

Histidine 15 contributes to the ATP binding site. Aspartate 17 contacts Mg(2+). Glutamate 43 is a K(+) binding site. Positions 56 and 99 each coordinate L-methionine. A flexible loop region spans residues 99–109 (QSGDIAQGVDT). Residues 173–175 (DGK), 241–242 (RF), aspartate 250, 256–257 (RK), alanine 273, and lysine 277 contribute to the ATP site. Residue aspartate 250 coordinates L-methionine. Lysine 281 serves as a coordination point for L-methionine.

The protein belongs to the AdoMet synthase family. In terms of assembly, homotetramer; dimer of dimers. Mg(2+) serves as cofactor. It depends on K(+) as a cofactor.

The protein localises to the cytoplasm. It catalyses the reaction L-methionine + ATP + H2O = S-adenosyl-L-methionine + phosphate + diphosphate. It participates in amino-acid biosynthesis; S-adenosyl-L-methionine biosynthesis; S-adenosyl-L-methionine from L-methionine: step 1/1. Catalyzes the formation of S-adenosylmethionine (AdoMet) from methionine and ATP. The overall synthetic reaction is composed of two sequential steps, AdoMet formation and the subsequent tripolyphosphate hydrolysis which occurs prior to release of AdoMet from the enzyme. The sequence is that of S-adenosylmethionine synthase from Nocardioides sp. (strain ATCC BAA-499 / JS614).